The sequence spans 201 residues: Recombination protein RecR (201 aa).

The C4-type zinc-finger motif lies at 57–72 (CQQCRNFTEEALCEIC). Residues 81 to 176 (TTLCIVETPG…NISRIAHGVP (96 aa)) enclose the Toprim domain.

Belongs to the RecR family.

May play a role in DNA repair. It seems to be involved in an RecBC-independent recombinational process of DNA repair. It may act with RecF and RecO. This chain is Recombination protein RecR, found in Colwellia psychrerythraea (strain 34H / ATCC BAA-681) (Vibrio psychroerythus).